The sequence spans 493 residues: MSKKYIIALDQGTTSSRAIVFDHSTNMVASCQREFSQMYPKPGWVEHDAMEIWASQSSTLIEALARADIHSEDVAAIGITNQRETTVIWDKATGKPVYNAIVWQCRRSKAICDELKTQGLEDYVKQATGLLLDPYFSGTKIKWILDNVDGVRERAEKGELLFGTIDTWLVWKLTEGQAHVTDPTNASRTMLFNIHTQEWDETLLKALNIPRSILPEVKPSSAVYGHTRIVGEGSHIAIAGMAGDQQAALFGQLCIEEGMAKNTYGTGCFLLMNTGTEAVQSQHGLLTTIAIGANGEVNYALEGSVFMGGATVQWLRDELGLIRDAQDTEYFASKVEDTHGVYLIPAFVGLGAPYWDPDARGALVGLTRGANRNHIIRAALEAIAYQSRDLLDAMAKDSRVELKQIKVDGGAVANDFLMQFQSDITNVEVQRPDLTETTAMGAAFLAGLAVGFWDSTDELKLKAGVERSFTPQITAQKRDSLYQGWQNAVARTR.

Thr-13 is an ADP binding site. ATP is bound by residues Thr-13, Thr-14, and Ser-15. Thr-13 contributes to the sn-glycerol 3-phosphate binding site. Position 17 (Arg-17) interacts with ADP. 4 residues coordinate sn-glycerol 3-phosphate: Arg-83, Glu-84, Tyr-135, and Asp-244. The glycerol site is built by Arg-83, Glu-84, Tyr-135, Asp-244, and Gln-245. Residues Thr-266 and Gly-309 each contribute to the ADP site. ATP-binding residues include Thr-266, Gly-309, Gln-313, and Gly-410. Positions 410 and 414 each coordinate ADP.

This sequence belongs to the FGGY kinase family.

It carries out the reaction glycerol + ATP = sn-glycerol 3-phosphate + ADP + H(+). Its pathway is polyol metabolism; glycerol degradation via glycerol kinase pathway; sn-glycerol 3-phosphate from glycerol: step 1/1. Inhibited by fructose 1,6-bisphosphate (FBP). In terms of biological role, key enzyme in the regulation of glycerol uptake and metabolism. Catalyzes the phosphorylation of glycerol to yield sn-glycerol 3-phosphate. This chain is Glycerol kinase, found in Shewanella halifaxensis (strain HAW-EB4).